The sequence spans 657 residues: Hemocyanin B chain (657 aa).

Cys-93 and Cys-98 are joined by a disulfide. Asn-167 carries an N-linked (GlcNAc...) asparagine glycan. The Cu cation site is built by His-194, His-198, His-224, His-344, His-348, and His-384. 2 disulfides stabilise this stretch: Cys-483-Cys-502 and Cys-562-Cys-609.

This sequence belongs to the tyrosinase family. Hemocyanin subfamily. As to quaternary structure, hexamer of a number of different chains, of which A, B, and C have been identified. Hemolymph.

Its subcellular location is the secreted. It is found in the extracellular space. In terms of biological role, hemocyanins are copper-containing oxygen carriers occurring freely dissolved in the hemolymph of many mollusks and arthropods. This Panulirus interruptus (California spiny lobster) protein is Hemocyanin B chain.